The primary structure comprises 93 residues: Phosphoribosyl-ATP pyrophosphatase (93 aa).

The protein belongs to the PRA-PH family.

It is found in the cytoplasm. The enzyme catalyses 1-(5-phospho-beta-D-ribosyl)-ATP + H2O = 1-(5-phospho-beta-D-ribosyl)-5'-AMP + diphosphate + H(+). The protein operates within amino-acid biosynthesis; L-histidine biosynthesis; L-histidine from 5-phospho-alpha-D-ribose 1-diphosphate: step 2/9. This is Phosphoribosyl-ATP pyrophosphatase from Rhodococcus jostii (strain RHA1).